A 378-amino-acid chain; its full sequence is MTEYLFTSESVSEGHPDKIADQISDALLDEILKQDLKARVACETYVKTGMVLIGGEITTTAWVDVEEITRKTINDIGYVNSDAGFDANSCAVLSAIGKQSPDINQGINRFDPLKQGAGDQGIIFGYATNETEFFMPAPITYAHLLMQKQSELRKKNILPWLRPDAKSQVTFKYNNGNIIAIDTVVLSTQHQENITQKYLKEAVMDEIIKPVLPDKWLTKNTKFFINPTGRFVIGGPMGDCGVTGRKIIVDTYGGMSRHGGGAFSGKDPSKVDRSAAYAARYVAKNIVASGLAARCEIQLSYAIGIAEPISIMIDTFNTGKISNSALISLVRSIFDLRPYGLIKMLNLLQPIYLKTAVYGHFGRKEFPWENLDKVNELS.

Histidine 15 is a binding site for ATP. Aspartate 17 is a binding site for Mg(2+). Glutamate 43 serves as a coordination point for K(+). L-methionine-binding residues include glutamate 56 and glutamine 99. Positions 99-109 are flexible loop; it reads QSPDINQGINR. ATP-binding positions include 164 to 166, 230 to 231, aspartate 239, 245 to 246, alanine 262, and lysine 266; these read DAK, RF, and RK. Aspartate 239 is an L-methionine binding site. Lysine 270 contributes to the L-methionine binding site.

The protein belongs to the AdoMet synthase family. Homotetramer; dimer of dimers. It depends on Mg(2+) as a cofactor. K(+) serves as cofactor.

The protein localises to the cytoplasm. It carries out the reaction L-methionine + ATP + H2O = S-adenosyl-L-methionine + phosphate + diphosphate. It functions in the pathway amino-acid biosynthesis; S-adenosyl-L-methionine biosynthesis; S-adenosyl-L-methionine from L-methionine: step 1/1. Catalyzes the formation of S-adenosylmethionine (AdoMet) from methionine and ATP. The overall synthetic reaction is composed of two sequential steps, AdoMet formation and the subsequent tripolyphosphate hydrolysis which occurs prior to release of AdoMet from the enzyme. This chain is S-adenosylmethionine synthase, found in Buchnera aphidicola subsp. Acyrthosiphon pisum (strain 5A).